The following is a 503-amino-acid chain: Trehalose-6-phosphate synthase (503 aa).

Residue R22 coordinates D-glucose 6-phosphate. 42–43 provides a ligand contact to UDP-alpha-D-glucose; sequence GG. D-glucose 6-phosphate is bound by residues Y94 and D148. UDP-alpha-D-glucose is bound by residues R290 and K295. R328 contributes to the D-glucose 6-phosphate binding site. UDP-alpha-D-glucose is bound at residue 393–397; sequence LVAKE. A disordered region spans residues 481–503; the sequence is GETGDSGVTGESTPAPESDSGSF.

Belongs to the glycosyltransferase 20 family. Homotetramer.

It catalyses the reaction ADP-alpha-D-glucose + D-glucose 6-phosphate = alpha,alpha-trehalose 6-phosphate + ADP + H(+). The enzyme catalyses CDP-alpha-D-glucose + D-glucose 6-phosphate = alpha,alpha-trehalose 6-phosphate + CDP + H(+). The catalysed reaction is GDP-alpha-D-glucose + D-glucose 6-phosphate = alpha,alpha-trehalose 6-phosphate + GDP + H(+). It carries out the reaction TDP-alpha-D-glucose + D-glucose 6-phosphate = 5-methyl-UDP + alpha,alpha-trehalose 6-phosphate + H(+). It catalyses the reaction D-glucose 6-phosphate + UDP-alpha-D-glucose = alpha,alpha-trehalose 6-phosphate + UDP + H(+). Its pathway is glycan biosynthesis; trehalose biosynthesis. Its activity is regulated as follows. Stimulated by the polynucleotide FII (physiological activator), and by chondroitin sulfate (CS) and heparin. Activation by the polyanion is inhibited by high salt concentration as well as by high concentrations of mononucleoside phosphates. In terms of biological role, involved in the production of glycogen and alpha-glucan via the TreS-Pep2 branch involved in the biosynthesis of maltose-1-phosphate (M1P), and probably in the osmoprotection via the biosynthesis of trehalose. Catalyzes the transfer of glucose from UDP-glucose (UDP-Glc) to glucose-6-phosphate (Glc-6-P) to form trehalose-6-phosphate. ADP-Glc, CDP-Glc, GDP-Glc and TDP-Glc are also glucosyl donors, however, when the pyrimidine sugar nucleotides (CDP-Glc, TDP-Glc and UDP-Glc) are used as substrates, there is an absolute requirement for a high molecular weight polyanion for activity. This Mycolicibacterium smegmatis (strain ATCC 700084 / mc(2)155) (Mycobacterium smegmatis) protein is Trehalose-6-phosphate synthase.